A 406-amino-acid polypeptide reads, in one-letter code: Paracaspase (406 aa).

The interval 193 to 374 (IGNSKYSQHR…TERKNNNIST (182 aa)) is caspase-like. Catalysis depends on residues His-266 and Cys-311.

Belongs to the peptidase C14B family.

Functionally, not required for DIF-induced autophagic cell death and necrotic cell death. The protein is Paracaspase (pcp) of Dictyostelium discoideum (Social amoeba).